The sequence spans 332 residues: Centrosomal AT-AC splicing factor (332 aa).

A required for centrosome location region spans residues 1–169; it reads MAPAQRCPLC…QSRQEVVRSV (169 aa). Lys-31 is modified (N6-acetyllysine; by NAT10). The stretch at 137 to 168 forms a coiled coil; it reads LDSYEEKEDKVIKEMAAQIREVEQSRQEVVRS. Residues 169–213 form a disordered region; that stretch reads VLEPQAVPDPEEGSSAPRSWKGMNSQVASSLQQPSNLDLPPAPEL. Residues 190–204 are compositionally biased toward polar residues; the sequence is GMNSQVASSLQQPSN.

In terms of assembly, interacts with SASS6; the interaction increases with CENATAC acetylation. Acetylated. Acetylation oscillates throughout the cell cycle, and the acetylation state at Lys-31 is regulated by the deacetylase SIRT1 and the acetyltransferase NAT10. Deacetylated CENATAC is responsible for its centrosome targeting, and acetylated CENATAC promotes SASS6 degradation by enhancing the binding affinity of SASS6 for APC/C E3 ubiquitin-protein ligase complex/FZR1.

It localises to the cytoplasm. It is found in the cytoskeleton. The protein localises to the microtubule organizing center. The protein resides in the centrosome. In terms of biological role, component of the minor spliceosome that promotes splicing of a specific, rare minor intron subtype. Negative regulator of centrosome duplication. Constrains centriole number by modulating the degradation of the centrosome-duplication-associated protein SASS6 in an acetylation-dependent manner. SIRT1 deacetylates CENATAC in G1 phase, allowing for SASS6 accumulation on the centrosome and subsequent procentriole assembly. The CENATAC acetylation level is restored in mitosis by NAT10, promoting SASS6 proteasome degradation by facilitating SASS6 binding to APC/C E3 ubiquitin-protein ligase complex/FZR1. This Homo sapiens (Human) protein is Centrosomal AT-AC splicing factor.